The following is an 831-amino-acid chain: Isethionate sulfite-lyase (831 aa).

The PFL domain maps to 32 to 701 (PRVFRLLERF…VVSATPNGRT (670 aa)). 2-hydroxyethane-1-sulfonate is bound by residues R189, Q193, 468-470 (CTE), and R679. The active-site Cysteine radical intermediate is the C468. The active-site Proton acceptor is the E470. The 124-residue stretch at 708 to 831 (DGSSASHGAD…LIARTEHDVM (124 aa)) folds into the Glycine radical domain. The residue at position 806 (G806) is a Glycine radical.

The protein belongs to the glycyl radical enzyme (GRE) family. Homodimer. In terms of processing, requires the activating protein IslB to generate the key active site glycyl radical on Gly-806 that is involved in catalysis.

It carries out the reaction 2-hydroxyethane-1-sulfonate = acetaldehyde + sulfite + H(+). It functions in the pathway organosulfur degradation; alkanesulfonate degradation. Its function is as follows. Involved in an anaerobic respiration pathway that converts the sulfonate isethionate (2-hydroxyethanesulfonate) to ammonia, acetate and sulfide. Catalyzes the radical-mediated C-S bond cleavage of isethionate (2-hydroxyethanesulfonate) to form sulfite and acetaldehyde. The polypeptide is Isethionate sulfite-lyase (Desulfovibrio desulfuricans (strain ATCC 27774 / DSM 6949 / MB)).